The sequence spans 476 residues: Bifunctional protein HldE (476 aa).

The segment at 1–319 (MKPTLPNYDQ…EAIHGSQDSG (319 aa)) is ribokinase. 195 to 198 (NMLE) serves as a coordination point for ATP. Aspartate 264 is a catalytic residue. The tract at residues 344-476 (MTNGCFDILH…IIEAIKGGRG (133 aa)) is cytidylyltransferase.

This sequence in the N-terminal section; belongs to the carbohydrate kinase PfkB family. It in the C-terminal section; belongs to the cytidylyltransferase family. In terms of assembly, homodimer.

It catalyses the reaction D-glycero-beta-D-manno-heptose 7-phosphate + ATP = D-glycero-beta-D-manno-heptose 1,7-bisphosphate + ADP + H(+). The enzyme catalyses D-glycero-beta-D-manno-heptose 1-phosphate + ATP + H(+) = ADP-D-glycero-beta-D-manno-heptose + diphosphate. It participates in nucleotide-sugar biosynthesis; ADP-L-glycero-beta-D-manno-heptose biosynthesis; ADP-L-glycero-beta-D-manno-heptose from D-glycero-beta-D-manno-heptose 7-phosphate: step 1/4. It functions in the pathway nucleotide-sugar biosynthesis; ADP-L-glycero-beta-D-manno-heptose biosynthesis; ADP-L-glycero-beta-D-manno-heptose from D-glycero-beta-D-manno-heptose 7-phosphate: step 3/4. Catalyzes the phosphorylation of D-glycero-D-manno-heptose 7-phosphate at the C-1 position to selectively form D-glycero-beta-D-manno-heptose-1,7-bisphosphate. Its function is as follows. Catalyzes the ADP transfer from ATP to D-glycero-beta-D-manno-heptose 1-phosphate, yielding ADP-D-glycero-beta-D-manno-heptose. In Aliivibrio fischeri (strain ATCC 700601 / ES114) (Vibrio fischeri), this protein is Bifunctional protein HldE.